The following is a 65-amino-acid chain: Protein C13 (65 aa).

Belongs to the poxviridae C13 protein family.

The sequence is that of Protein C13 from Vaccinia virus (strain Copenhagen) (VACV).